A 351-amino-acid chain; its full sequence is Putative F-box protein At5g52610 (351 aa).

An F-box domain is found at methionine 1–leucine 41.

The sequence is that of Putative F-box protein At5g52610 from Arabidopsis thaliana (Mouse-ear cress).